Consider the following 211-residue polypeptide: Probable oligoribonuclease (211 aa).

In terms of domain architecture, Exonuclease spans 38–202; it reads IVWMDLEMTG…DDIRESIKEL (165 aa). Y159 is an active-site residue.

This sequence belongs to the oligoribonuclease family.

3'-to-5' exoribonuclease specific for small oligoribonucleotides. In Drosophila melanogaster (Fruit fly), this protein is Probable oligoribonuclease.